The sequence spans 334 residues: GTPase Obg (334 aa).

The Obg domain maps to 1–159 (MRFVDEVVIK…KEVRLELNLL (159 aa)). Residues 160–331 (ADVALLGLPN…LAKKLNEFLQ (172 aa)) enclose the OBG-type G domain. GTP contacts are provided by residues 166–173 (GLPNAGKS), 191–195 (FTTMY), 212–215 (DIPG), 282–285 (NKID), and 312–314 (SAA). Ser173 and Thr193 together coordinate Mg(2+).

This sequence belongs to the TRAFAC class OBG-HflX-like GTPase superfamily. OBG GTPase family. As to quaternary structure, monomer. The cofactor is Mg(2+).

It localises to the cytoplasm. Functionally, an essential GTPase which binds GTP, GDP and possibly (p)ppGpp with moderate affinity, with high nucleotide exchange rates and a fairly low GTP hydrolysis rate. Plays a role in control of the cell cycle, stress response, ribosome biogenesis and in those bacteria that undergo differentiation, in morphogenesis control. This chain is GTPase Obg, found in Francisella tularensis subsp. holarctica (strain FTNF002-00 / FTA).